We begin with the raw amino-acid sequence, 142 residues long: Heat shock protein HSP.16.4 (142 aa).

In terms of domain architecture, sHSP spans 27-142 (NLFNDLKSNL…KEIKTSIPIE (116 aa)).

Belongs to the small heat shock protein (HSP20) family.

It is found in the cytoplasm. The sequence is that of Heat shock protein HSP.16.4 from Streptococcus thermophilus.